Here is a 371-residue protein sequence, read N- to C-terminus: Cyanide hydratase (371 aa).

In terms of domain architecture, CN hydrolase spans 8–286; the sequence is YKAAAVQAEP…EGLMFVEIDL (279 aa). Residue Glu48 is the Proton acceptor of the active site. The active site involves Lys130. Cys165 functions as the Nucleophile in the catalytic mechanism. Residues 326–356 form a disordered region; that stretch reads DGGIGTYNTQDRVGLNRPLDAPKVDGPSGVS.

This sequence belongs to the carbon-nitrogen hydrolase superfamily. Nitrilase family. Oligomer of dimers, forming left-handed helical fibers.

The enzyme catalyses formamide = hydrogen cyanide + H2O. Its function is as follows. Catalyzes the hydration of cyanide to formamide. Degradation of cyanide may be important for plant pathogenic fungi in infection of cyanogenic plants. Can also transform some nitriles like 2-cyanopyridine and fumaronitrile and has a minor activity with 4-cyanophenyl acetonitrile (4-CPA). This Botryotinia fuckeliana (strain T4) (Noble rot fungus) protein is Cyanide hydratase.